Consider the following 398-residue polypeptide: Phosphoglycerate kinase (398 aa).

Residues 21 to 23 (DFN), arginine 41, 64 to 67 (HLGR), arginine 123, and arginine 156 each bind substrate. Residues lysine 207, glycine 294, glutamate 325, and 354–357 (GGDS) each bind ATP.

This sequence belongs to the phosphoglycerate kinase family. Monomer.

The protein localises to the cytoplasm. It carries out the reaction (2R)-3-phosphoglycerate + ATP = (2R)-3-phospho-glyceroyl phosphate + ADP. It functions in the pathway carbohydrate degradation; glycolysis; pyruvate from D-glyceraldehyde 3-phosphate: step 2/5. The protein is Phosphoglycerate kinase of Salinibacter ruber (strain DSM 13855 / M31).